The primary structure comprises 165 residues: Nucleotide-binding protein PMT9312_0481 (165 aa).

It belongs to the YajQ family.

In terms of biological role, nucleotide-binding protein. The chain is Nucleotide-binding protein PMT9312_0481 from Prochlorococcus marinus (strain MIT 9312).